Consider the following 207-residue polypeptide: Large ribosomal subunit protein uL4 (207 aa).

The disordered stretch occupies residues 49-78 (HAVKNRSAVSGGGRKPWRQKGTGRARQGSI).

Belongs to the universal ribosomal protein uL4 family. As to quaternary structure, part of the 50S ribosomal subunit.

In terms of biological role, one of the primary rRNA binding proteins, this protein initially binds near the 5'-end of the 23S rRNA. It is important during the early stages of 50S assembly. It makes multiple contacts with different domains of the 23S rRNA in the assembled 50S subunit and ribosome. Forms part of the polypeptide exit tunnel. This chain is Large ribosomal subunit protein uL4, found in Streptococcus equi subsp. zooepidemicus (strain H70).